The following is a 724-amino-acid chain: Outer spore wall protein 2 (724 aa).

Disordered regions lie at residues 407 to 427 (NSGQ…KNRV) and 477 to 497 (TSGG…YDDK).

The protein localises to the cytoplasm. It localises to the prospore membrane. Its function is as follows. May be involved in a late step of spore wall assembly. The sequence is that of Outer spore wall protein 2 (OSW2) from Saccharomyces cerevisiae (strain ATCC 204508 / S288c) (Baker's yeast).